Here is a 343-residue protein sequence, read N- to C-terminus: D-beta-hydroxybutyrate dehydrogenase, mitochondrial (343 aa).

Residues Met1–Tyr46 constitute a mitochondrion transit peptide. Ile60–Ala84 is a binding site for NAD(+). Residues Lys73 and Lys97 each carry the N6-acetyllysine modification. The residue at position 103 (Lys103) is an N6-acetyllysine; alternate. Position 103 is an N6-succinyllysine; alternate (Lys103). An N6-acetyllysine mark is found at Lys132 and Lys177. Met196 serves as a coordination point for substrate. Cys209 serves as the catalytic Proton acceptor. Residue Lys212 is modified to N6-acetyllysine. O-linked (GlcNAc) serine glycosylation is present at Ser219. Ser246 bears the Phosphoserine mark. An N6-acetyllysine modification is found at Lys258. At Lys259 the chain carries N6-acetyllysine; alternate. The residue at position 259 (Lys259) is an N6-succinyllysine; alternate. The residue at position 280 (Lys280) is an N6-acetyllysine.

This sequence belongs to the short-chain dehydrogenases/reductases (SDR) family. Homotetramer. Post-translationally, acetylation of Lys-132 is observed in liver mitochondria from fasted mice but not from fed mice.

The protein localises to the mitochondrion inner membrane. Its subcellular location is the mitochondrion matrix. It carries out the reaction (R)-3-hydroxybutanoate + NAD(+) = acetoacetate + NADH + H(+). With respect to regulation, requires phosphatidylcholine as an allosteric activator for enzymatic activity. The protein is D-beta-hydroxybutyrate dehydrogenase, mitochondrial of Mus musculus (Mouse).